The primary structure comprises 104 residues: Large ribosomal subunit protein bL21 (104 aa).

Belongs to the bacterial ribosomal protein bL21 family. As to quaternary structure, part of the 50S ribosomal subunit. Contacts protein L20.

Its function is as follows. This protein binds to 23S rRNA in the presence of protein L20. In Streptococcus pneumoniae serotype 2 (strain D39 / NCTC 7466), this protein is Large ribosomal subunit protein bL21.